The primary structure comprises 479 residues: MAGFRLTTKVQVSGWRFLLRRVEHAIVRRDTRMFDDPLQFYSRAVFAGVVVSVLICLGAALMAYFKPLGKQGSDQLLVDRTTNQLYVMLPGSNQLRPVYNLTSARLVLGNASNPVAVKSEELNRISKGQSIGIPGAPYATPTGTPASQWTLCDTVAKPDSSAPKVETSILIRTLAIDSGVGPIRADQGMLVSYEGANWLITEGGRHSIDLADRAVTSAVGIPVTAKPTPISQGLFNALPNRGPWQLPQIPAAGAPNSVGLPENLVIGSVFRTATESDPQHYVVLPDGVARVNNTTAAALRATNSYGLMQPPAVEASVVAKIPEQVYVSPLPDQPLDVLLRQDSPVLCWSWQREPGDQAPKTTVIAGRRLPLPASAIGTGIDQIGGDSTVYIEGGQFVRLQSPDPRVGESMYYIDPQGVRYGIANDDAAKNLGLAGPVNAPWQVVGLLVDGPVLSKEAALIEHDTLPADPNPRKVASGEG.

At 1–44 (MAGFRLTTKVQVSGWRFLLRRVEHAIVRRDTRMFDDPLQFYSRA) the chain is on the cytoplasmic side. Residues 45–65 (VFAGVVVSVLICLGAALMAYF) form a helical membrane-spanning segment. The Periplasmic portion of the chain corresponds to 66–479 (KPLGKQGSDQ…NPRKVASGEG (414 aa)). Cysteines 152 and 347 form a disulfide.

The protein belongs to the EccB family. As to quaternary structure, part of the ESX-1 / type VII secretion system (T7SS), which is composed of cytosolic and membrane components. The ESX-1 membrane complex is composed of EccB1, EccCa1, EccCb1, EccD1 and EccE1.

The protein resides in the cell inner membrane. In terms of biological role, an ATPase. Part of the ESX-1 / type VII specialized secretion system (T7SS), which exports several proteins including EsxA and EsxB. Plays a role in DNA conjugation, in both donor and recipient strains. The polypeptide is ESX-1 secretion system ATPase EccB1 (Mycolicibacterium smegmatis (strain MKD8) (Mycobacterium smegmatis)).